A 372-amino-acid polypeptide reads, in one-letter code: DNA replication and repair protein RecF (372 aa).

ATP is bound at residue 30-37 (GENGQGKT).

It belongs to the RecF family.

The protein resides in the cytoplasm. In terms of biological role, the RecF protein is involved in DNA metabolism; it is required for DNA replication and normal SOS inducibility. RecF binds preferentially to single-stranded, linear DNA. It also seems to bind ATP. This Anaeromyxobacter sp. (strain K) protein is DNA replication and repair protein RecF.